The chain runs to 118 residues: MATTLRDILDKLLGRQPASAKTARERLQLVLAHDRSDLSPELLDQMRREIFEVVAKYVEIDLEEGEVSLETEDRMTALVANLPIKRSQAKAVSSQENGASSQEAVSSQESVSTPGAME.

Positions 86–118 (RSQAKAVSSQENGASSQEAVSSQESVSTPGAME) are disordered. Residues 99–112 (ASSQEAVSSQESVS) show a composition bias toward low complexity.

The protein belongs to the MinE family.

Prevents the cell division inhibition by proteins MinC and MinD at internal division sites while permitting inhibition at polar sites. This ensures cell division at the proper site by restricting the formation of a division septum at the midpoint of the long axis of the cell. The polypeptide is Cell division topological specificity factor (Prochlorococcus marinus (strain MIT 9313)).